A 199-amino-acid chain; its full sequence is Protein GrpE (199 aa).

This sequence belongs to the GrpE family. Homodimer.

The protein localises to the cytoplasm. Its function is as follows. Participates actively in the response to hyperosmotic and heat shock by preventing the aggregation of stress-denatured proteins, in association with DnaK and GrpE. It is the nucleotide exchange factor for DnaK and may function as a thermosensor. Unfolded proteins bind initially to DnaJ; upon interaction with the DnaJ-bound protein, DnaK hydrolyzes its bound ATP, resulting in the formation of a stable complex. GrpE releases ADP from DnaK; ATP binding to DnaK triggers the release of the substrate protein, thus completing the reaction cycle. Several rounds of ATP-dependent interactions between DnaJ, DnaK and GrpE are required for fully efficient folding. In Fusobacterium nucleatum subsp. nucleatum (strain ATCC 25586 / DSM 15643 / BCRC 10681 / CIP 101130 / JCM 8532 / KCTC 2640 / LMG 13131 / VPI 4355), this protein is Protein GrpE.